Reading from the N-terminus, the 146-residue chain is Small ribosomal subunit protein bS16 (146 aa).

Residues 119–146 (GSENKGGKSKKAEEKSAEKTAEKSEGEA) are disordered. Positions 128–146 (KKAEEKSAEKTAEKSEGEA) are enriched in basic and acidic residues.

This sequence belongs to the bacterial ribosomal protein bS16 family.

The polypeptide is Small ribosomal subunit protein bS16 (Thermobifida fusca (strain YX)).